We begin with the raw amino-acid sequence, 310 residues long: Transcription factor UNE12 (310 aa).

Disordered regions lie at residues 124–156 and 229–253; these read HGQP…ATDP and SSSV…WSND. The bHLH domain occupies 152–201; sequence QATDPHSIAERLRRERIAERIRALQELVPTVNKTDRAAMIDEIVDYVKFL.

In terms of assembly, homodimer. As to expression, expressed constitutively in roots, leaves, stems, and flowers.

The protein localises to the nucleus. Required for ovule fertilization. This is Transcription factor UNE12 (UNE12) from Arabidopsis thaliana (Mouse-ear cress).